Reading from the N-terminus, the 415-residue chain is 3-isopropylmalate dehydratase large subunit (415 aa).

3 residues coordinate [4Fe-4S] cluster: C295, C353, and C356.

The protein belongs to the aconitase/IPM isomerase family. LeuC type 2 subfamily. Heterodimer of LeuC and LeuD. The cofactor is [4Fe-4S] cluster.

The enzyme catalyses (2R,3S)-3-isopropylmalate = (2S)-2-isopropylmalate. The protein operates within amino-acid biosynthesis; L-leucine biosynthesis; L-leucine from 3-methyl-2-oxobutanoate: step 2/4. Its function is as follows. Catalyzes the isomerization between 2-isopropylmalate and 3-isopropylmalate, via the formation of 2-isopropylmaleate. The protein is 3-isopropylmalate dehydratase large subunit of Pyrobaculum neutrophilum (strain DSM 2338 / JCM 9278 / NBRC 100436 / V24Sta) (Thermoproteus neutrophilus).